The following is a 142-amino-acid chain: Small ribosomal subunit protein uS11c (142 aa).

It belongs to the universal ribosomal protein uS11 family. As to quaternary structure, part of the 30S ribosomal subunit.

Its subcellular location is the plastid. The protein localises to the chloroplast. The polypeptide is Small ribosomal subunit protein uS11c (Welwitschia mirabilis (Tree tumbo)).